The following is a 1002-amino-acid chain: MLRAAAAAAAVFPSRFAAAPAVAAVEEVRSPLLRVLGALRGGRVSTLGRRARFCSNSAGSDSEAAAAEAKAEDAVAAEGEADGKASSAIVPTVLRPEDCLSVIALPLPHRPLFPGFYMPIYVKDQKLLQALVENRKRSIPYAGAFLVKDEEGTDPNIVTSSDSDKSIDDLKGKELLQRLNEVGTLAQITSIQGDQVVLLGHRRLKITEMVQEDPLTVKVDHLKEKPYDKDDDVIKATSFEVISTLREVLKASSLWKDHVQTYTQHMGDFNYPRLADFGAAISGANKFLCQEVLEELDVYKRLKLTLELVKKEMEISKLQQSIAKAIEEKISGDQRRYLLNEQLKAIKKELGLETDDKTALSAKFRERIEAKKEKCPAHVLQVIEEELTKLQLLEASSSEFNVTRNYLDWLTVLPWGNYSDENFDVHHAQQILDEDHYGLSDVKERILEFIAVGKLRGTSQGKIICLSGPPGVGKTSIGRSIARALNRKFYRFSVGGLADVAEIKGHRRTYVGAMPGKMVQCLKSVGTANPLVLIDEIDKLGRGHSGDPASALLELLDPEQNVNFLDHYLDVPIDLSKVLFVCTANVIEMIPNPLLDRMEIIAIAGYITDEKMHIARDYLEKNTREACGIKPEQAEVTDAALLALIESYCREAGVRNLQKQIEKIYRKIALQLVRQGVSNEPTQEAAIVTASEEPNGGDSANKLKDETMEDPATENAAMTNADTASKEASELDLLKRTVDHDVHPAETPKEAVLTDSALSTDKLCTPEGNKDMEGAKEESADKAVEKVVIDSSNLGDYVGKPVFQAERIYEQTPVGVVMGLAWTAMGGSTLYIETTKVEEGDGKGALVLTGQLGDVMKESAQIAHTVGRAILLDKEPENLFFANSKVHLHVPAGSTPKDGPSAGCTMITSMLSLAMGKPVKKDLAMTGEVTLTGRILPIGGVKEKTIAARRSAVKTIVFPAANKRDFDELAPNVKEGLEVHFVDTYNEIFDIAFQSETQTETS.

The Lon N-terminal domain occupies 102-313; sequence VIALPLPHRP…LTLELVKKEM (212 aa). 468–475 is an ATP binding site; it reads GPPGVGKT. The Lon proteolytic domain maps to 811–995; sequence QTPVGVVMGL…NEIFDIAFQS (185 aa). Residues Ser901 and Lys944 contribute to the active site.

This sequence belongs to the peptidase S16 family. Homohexamer or homoheptamer. Organized in a ring with a central cavity.

It localises to the mitochondrion matrix. It catalyses the reaction Hydrolysis of proteins in presence of ATP.. ATP-dependent serine protease that mediates the selective degradation of misfolded, unassembled or oxidatively damaged polypeptides as well as certain short-lived regulatory proteins in the mitochondrial matrix. May also have a chaperone function in the assembly of inner membrane protein complexes. Participates in the regulation of mitochondrial gene expression and in the maintenance of the integrity of the mitochondrial genome. Binds to mitochondrial DNA in a site-specific manner. The sequence is that of Lon protease homolog, mitochondrial from Oryza sativa subsp. indica (Rice).